We begin with the raw amino-acid sequence, 155 residues long: 6,7-dimethyl-8-ribityllumazine synthase (155 aa).

5-amino-6-(D-ribitylamino)uracil is bound by residues phenylalanine 24, 58–60 (AFE), and 82–84 (AII). A (2S)-2-hydroxy-3-oxobutyl phosphate-binding site is contributed by 87-88 (ST). Histidine 90 acts as the Proton donor in catalysis. Residue phenylalanine 115 coordinates 5-amino-6-(D-ribitylamino)uracil. Arginine 129 provides a ligand contact to (2S)-2-hydroxy-3-oxobutyl phosphate.

This sequence belongs to the DMRL synthase family.

The enzyme catalyses (2S)-2-hydroxy-3-oxobutyl phosphate + 5-amino-6-(D-ribitylamino)uracil = 6,7-dimethyl-8-(1-D-ribityl)lumazine + phosphate + 2 H2O + H(+). It participates in cofactor biosynthesis; riboflavin biosynthesis; riboflavin from 2-hydroxy-3-oxobutyl phosphate and 5-amino-6-(D-ribitylamino)uracil: step 1/2. In terms of biological role, catalyzes the formation of 6,7-dimethyl-8-ribityllumazine by condensation of 5-amino-6-(D-ribitylamino)uracil with 3,4-dihydroxy-2-butanone 4-phosphate. This is the penultimate step in the biosynthesis of riboflavin. In Chlorobium luteolum (strain DSM 273 / BCRC 81028 / 2530) (Pelodictyon luteolum), this protein is 6,7-dimethyl-8-ribityllumazine synthase.